We begin with the raw amino-acid sequence, 813 residues long: Disintegrin and metalloproteinase domain-containing protein 33 (813 aa).

The N-terminal stretch at 1-29 (MGWRPRRARGTPLLLLLLLLLLWPVPGAG) is a signal peptide. The propeptide occupies 30–203 (VLQGHIPGQP…PGGPQSRGRR (174 aa)). Over 30-701 (VLQGHIPGQP…GPVQAENHDT (672 aa)) the chain is Extracellular. Asparagine 109 carries an N-linked (GlcNAc...) asparagine glycan. A Cysteine switch motif is present at residues 131–138 (CTCSGMSG). Cysteine 133 contributes to the Zn(2+) binding site. Asparagine 145 carries an N-linked (GlcNAc...) asparagine glycan. Residues 184–205 (PGNKAGMTSLPGGPQSRGRREA) are disordered. The 200-residue stretch at 210–409 (KYLELYIVAD…GGGACLSNAP (200 aa)) folds into the Peptidase M12B domain. 2 N-linked (GlcNAc...) asparagine glycosylation sites follow: asparagine 231 and asparagine 276. Cystine bridges form between cysteine 320–cysteine 404, cysteine 360–cysteine 388, and cysteine 361–cysteine 371. Histidine 345 serves as a coordination point for Zn(2+). The active site involves glutamate 346. Zn(2+) contacts are provided by histidine 349 and histidine 355. Residues 417–503 (PALCGNGFVE…HCPPDVYLLD (87 aa)) form the Disintegrin domain. A glycan (N-linked (GlcNAc...) asparagine) is linked at asparagine 448. 4 cysteine pairs are disulfide-bonded: cysteine 475–cysteine 495, cysteine 653–cysteine 663, cysteine 657–cysteine 669, and cysteine 671–cysteine 680. Residues 649-681 (ELQRCLTACHSHGVCNSNHNCHCAPGWAPPFCD) enclose the EGF-like domain. The chain crosses the membrane as a helical span at residues 702–722 (FLLAMLLSVLLPLLPGAGLAW). The Cytoplasmic segment spans residues 723–813 (CCYRLPGAHL…QVQMPRSCLW (91 aa)). Positions 746–813 (SGPKDGPHRD…QVQMPRSCLW (68 aa)) are disordered. The span at 780-791 (ENSHEPSSHPEK) shows a compositional bias: basic and acidic residues.

Requires Zn(2+) as cofactor. Post-translationally, the precursor is cleaved by a furin endopeptidase. As to expression, expressed in all tissues, except liver, with high expression in placenta, lung, spleen and veins.

It is found in the membrane. The chain is Disintegrin and metalloproteinase domain-containing protein 33 (ADAM33) from Homo sapiens (Human).